The primary structure comprises 108 residues: Cuticle protein AM1199 (108 aa).

Gln1 carries the pyrrolidone carboxylic acid modification. In terms of domain architecture, Chitin-binding type R&amp;R spans 26–91; the sequence is DGNFGYDFET…AESPLIPTPH (66 aa). Residue Thr89 is glycosylated (O-linked (HexNAc) threonine).

Arthrodial membrane.

The protein is Cuticle protein AM1199 of Cancer pagurus (Rock crab).